The chain runs to 90 residues: uncharacterized protein (90 aa).

It to E.coli RlpA.

This is an uncharacterized protein from Synechocystis sp. (strain ATCC 27184 / PCC 6803 / Kazusa).